The sequence spans 39 residues: GWLRKIGKKIERVGQHTRDATIQVLGIAQQAANVAATAR.

At arginine 39 the chain carries Arginine amide.

This sequence belongs to the cecropin family.

The protein localises to the secreted. Functionally, sarcotoxins, which are potent bactericidal proteins, are produced in response to injury. They are cytotoxic to both Gram-positive and Gram-negative bacteria. This is Sarcotoxin-1C from Sarcophaga peregrina (Flesh fly).